The sequence spans 192 residues: Ion-translocating oxidoreductase complex subunit A (192 aa).

6 helical membrane passes run 5–25 (LLLLVGTVLVNNFVLVKFLGL), 39–59 (IGMSMATTFVLTLASILSYLV), 65–85 (LPFDLGYLRTMSFILVIAVVV), 102–122 (ALGIYLPLITTNCAVLGVALL), 134–154 (AIFGFGAAVGFSLVLILFSAM), and 171–191 (AIAMVTAGLMSLAFMGFTGLV).

This sequence belongs to the NqrDE/RnfAE family. The complex is composed of six subunits: RnfA, RnfB, RnfC, RnfD, RnfE and RnfG.

It is found in the cell inner membrane. Part of a membrane-bound complex that couples electron transfer with translocation of ions across the membrane. The sequence is that of Ion-translocating oxidoreductase complex subunit A from Shewanella piezotolerans (strain WP3 / JCM 13877).